We begin with the raw amino-acid sequence, 328 residues long: MCHQQLVISWFSLVFLASPLVAIWELKKDVYVVELDWYPDAPGEMVVLTCDTPEEDGITWTLDQSSEVLGSGKTLTIQVKEFGDAGQYTCHKGGEVLSHSLLLLHKKEDGIWSTDILKDQKEPKNKTFLRCEAKNYSGRFTCWWLTTISTDLTFSVKSSRGSSDPQGVTCGAATLSAERVRGDNKEYEYSVECQEDSACPAAEESLPIEVMVDAVHKLKYENYTSSFFIRDIIKPDPPKNLQLKPLKNSRQVEVSWEYPDTWSTPHSYFSLTFCVQVQGKSKREKKDRVFTDKTSATVICRKNASISVRAQDRYYSSSWSEWASVPCS.

The N-terminal stretch at 1–22 (MCHQQLVISWFSLVFLASPLVA) is a signal peptide. Residues 23–106 (IWELKKDVYV…LSHSLLLLHK (84 aa)) enclose the Ig-like C2-type domain. Cystine bridges form between Cys50/Cys90, Cys131/Cys142, and Cys170/Cys193. Residue Asn135 is glycosylated (N-linked (GlcNAc...) asparagine). The N-linked (GlcNAc...) asparagine glycan is linked to Asn222. Residues 237 to 328 (PPKNLQLKPL…WSEWASVPCS (92 aa)) form the Fibronectin type-III domain. Cys300 and Cys327 are disulfide-bonded. Residue Trp319 is glycosylated (C-linked (Man) tryptophan).

It belongs to the IL-12B family. As to quaternary structure, heterodimer with IL12A; disulfide-linked. The heterodimer is known as interleukin IL-12. Heterodimer with IL23A; disulfide-linked. The heterodimer is known as interleukin IL-23. Also secreted as a monomer. Interacts with NBR1; this interaction promotes IL-12 secretion. Post-translationally, known to be C-mannosylated in the recombinant protein; it is not yet known for sure if the wild-type protein is also modified.

It localises to the secreted. Its function is as follows. Cytokine that can act as a growth factor for activated T and NK cells, enhance the lytic activity of NK/lymphokine-activated killer cells, and stimulate the production of IFN-gamma by resting PBMC. Associates with IL23A to form the IL-23 interleukin, a heterodimeric cytokine which functions in innate and adaptive immunity. IL-23 may constitute with IL-17 an acute response to infection in peripheral tissues. IL-23 binds to a heterodimeric receptor complex composed of IL12RB1 and IL23R, activates the Jak-Stat signaling cascade, stimulates memory rather than naive T-cells and promotes production of pro-inflammatory cytokines. IL-23 induces autoimmune inflammation and thus may be responsible for autoimmune inflammatory diseases and may be important for tumorigenesis. The polypeptide is Interleukin-12 subunit beta (IL12B) (Homo sapiens (Human)).